Consider the following 220-residue polypeptide: Guanylate kinase (220 aa).

In terms of domain architecture, Guanylate kinase-like spans Gly15 to Lys194. Ser22–Ser29 serves as a coordination point for ATP.

Belongs to the guanylate kinase family.

It localises to the cytoplasm. It carries out the reaction GMP + ATP = GDP + ADP. Its function is as follows. Essential for recycling GMP and indirectly, cGMP. This Agrobacterium fabrum (strain C58 / ATCC 33970) (Agrobacterium tumefaciens (strain C58)) protein is Guanylate kinase.